The following is a 307-amino-acid chain: MSHISVLLFETVESLLADRTTGVYIDATFGRGGHTRLLLSKLDENARVYAFDKDPQALEVAAALAQEDPRFTIIHASFADIKEKMQEIGVQSVDGIMADLGVSSPQLDQAERGFSFMQDGPLDMRMDNSKGLTADEWLLEVEEEDLANIIYQYGEERYSRRIARAIKQAGKLDTTAQLAEIVKTAHPKWEKHKHPATRTFQAIRIAINKELDDIEVFLPQAVDLLKPKGRLSVISFHSLEDRLIKQFIQKESTLAEDSGWGMPQQQVDTRRLKKISRVRASEEEVKANPRSRSAWLRVAERLEQKGA.

S-adenosyl-L-methionine is bound by residues 32-34 (GGH), aspartate 52, phenylalanine 78, aspartate 99, and glutamine 106.

The protein belongs to the methyltransferase superfamily. RsmH family.

It localises to the cytoplasm. It catalyses the reaction cytidine(1402) in 16S rRNA + S-adenosyl-L-methionine = N(4)-methylcytidine(1402) in 16S rRNA + S-adenosyl-L-homocysteine + H(+). Functionally, specifically methylates the N4 position of cytidine in position 1402 (C1402) of 16S rRNA. In Acinetobacter baumannii (strain AB0057), this protein is Ribosomal RNA small subunit methyltransferase H.